A 231-amino-acid polypeptide reads, in one-letter code: Large ribosomal subunit protein uL1 (231 aa).

Belongs to the universal ribosomal protein uL1 family. As to quaternary structure, part of the 50S ribosomal subunit.

In terms of biological role, binds directly to 23S rRNA. The L1 stalk is quite mobile in the ribosome, and is involved in E site tRNA release. Functionally, protein L1 is also a translational repressor protein, it controls the translation of the L11 operon by binding to its mRNA. In Chromobacterium violaceum (strain ATCC 12472 / DSM 30191 / JCM 1249 / CCUG 213 / NBRC 12614 / NCIMB 9131 / NCTC 9757 / MK), this protein is Large ribosomal subunit protein uL1.